The chain runs to 299 residues: ATP synthase gamma chain (299 aa).

It belongs to the ATPase gamma chain family. F-type ATPases have 2 components, CF(1) - the catalytic core - and CF(0) - the membrane proton channel. CF(1) has five subunits: alpha(3), beta(3), gamma(1), delta(1), epsilon(1). CF(0) has three main subunits: a, b and c.

Its subcellular location is the cell inner membrane. Functionally, produces ATP from ADP in the presence of a proton gradient across the membrane. The gamma chain is believed to be important in regulating ATPase activity and the flow of protons through the CF(0) complex. The protein is ATP synthase gamma chain of Rhodospirillum rubrum.